The primary structure comprises 357 residues: RNA-binding protein 43 (357 aa).

The 90-residue stretch at 15 to 104 (RTVVVAGLPV…VSLRVSHFGD (90 aa)) folds into the RRM domain.

This Homo sapiens (Human) protein is RNA-binding protein 43 (RBM43).